Here is a 555-residue protein sequence, read N- to C-terminus: E3 ubiquitin-protein ligase ARIH1 (555 aa).

The segment covering 1–47 (MDSDEGYNYEFDEDEECSEEDSGAEEEEDEDDDEPDDDNLDLGEVEL) has biased composition (acidic residues). The interval 1–93 (MDSDEGYNYE…GGGGGPGHEQ (93 aa)) is disordered. Over residues 65 to 90 (ETGGGGGSALGPGGGGGGGGGGGGPG) the composition is skewed to gly residues. Residues 103–151 (TAEQILQHMVECIREVNEVIQNPATITRILLSHFNWDKEKLMERYFDGN) form a UBA-like region. Residue lysine 140 is modified to N6-acetyllysine. The interval 180–391 (QDMPCQICYL…SAWYNCNRYN (212 aa)) is TRIAD supradomain. The Zn(2+) site is built by cysteine 184, cysteine 187, cysteine 201, histidine 203, cysteine 206, cysteine 209, cysteine 229, cysteine 234, cysteine 274, cysteine 279, cysteine 295, cysteine 297, cysteine 302, cysteine 305, histidine 310, cysteine 315, cysteine 342, and cysteine 345. The RING-type 1 zinc finger occupies 184 to 234 (CQICYLNYPNSYFTGLECGHKFCMQCWSEYLTTKIMEEGMGQTISCPAHGC). The segment at 254 to 315 (LKYQHLITNS…GENWHDPVKC (62 aa)) adopts an IBR-type zinc-finger fold. An RING-type 2; atypical zinc finger spans residues 342-373 (CPKCHVTIEKDGGCNHMVCRNQNCKAEFCWVC). Cysteine 355 is an active-site residue. Zn(2+) is bound by residues cysteine 360, cysteine 365, cysteine 370, cysteine 373, histidine 380, and cysteine 387. Residues 406 to 555 (RAALQRYLFY…EKDLWEYIED (150 aa)) form an ariadne domain region.

This sequence belongs to the RBR family. Ariadne subfamily. In terms of assembly, interacts (via the first RING-type zinc finger) with UBE2L3. Associates with cullin-RING ubiquitin ligase (CRL) complexes containing CUL1, CUL2 and CUL3. Interacts with neddylated CUL1. Interacts with neddylated CUL2. Interacts with neddylated CUL3. Interacts with neddylated CUL4A.

It localises to the cytoplasm. It is found in the nucleus. The protein localises to the cajal body. It catalyses the reaction [E2 ubiquitin-conjugating enzyme]-S-ubiquitinyl-L-cysteine + [acceptor protein]-L-lysine = [E2 ubiquitin-conjugating enzyme]-L-cysteine + [acceptor protein]-N(6)-ubiquitinyl-L-lysine.. It participates in protein modification; protein ubiquitination. With respect to regulation, autoinhibited by the ariadne domain, which masks the second RING-type zinc finger that contains the active site and inhibits the E3 activity. Inhibition is relieved upon binding to neddylated cullin-RING ubiquitin ligase complexes, which activate the E3 ligase activity of ARIH1. Its function is as follows. E3 ubiquitin-protein ligase, which catalyzes ubiquitination of target proteins together with ubiquitin-conjugating enzyme E2 UBE2L3. Acts as an atypical E3 ubiquitin-protein ligase by working together with cullin-RING ubiquitin ligase (CRL) complexes and initiating ubiquitination of CRL substrates: associates with CRL complexes and specifically mediates addition of the first ubiquitin on CRLs targets. The initial ubiquitin is then elongated by CDC34/UBE2R1 and UBE2R2. E3 ubiquitin-protein ligase activity is activated upon binding to neddylated cullin-RING ubiquitin ligase complexes. Plays a role in protein translation in response to DNA damage by mediating ubiquitination of EIF4E2, the consequences of EIF4E2 ubiquitination are however unclear. According to a report, EIF4E2 ubiquitination leads to promote EIF4E2 cap-binding and protein translation arrest. According to another report EIF4E2 ubiquitination leads to its subsequent degradation. Acts as the ligase involved in ISGylation of EIF4E2. In vitro, controls the degradation of the LINC (LInker of Nucleoskeleton and Cytoskeleton) complex member SUN2 and may therefore have a role in the formation and localization of the LINC complex, and as a consequence, may act in nuclear subcellular localization and nuclear morphology. The sequence is that of E3 ubiquitin-protein ligase ARIH1 (ARIH1) from Bos taurus (Bovine).